Here is a 558-residue protein sequence, read N- to C-terminus: Dihydroxy-acid dehydratase (558 aa).

D81 contributes to the Mg(2+) binding site. C122 provides a ligand contact to [2Fe-2S] cluster. Residues D123 and K124 each coordinate Mg(2+). At K124 the chain carries N6-carboxylysine. C195 serves as a coordination point for [2Fe-2S] cluster. E447 contributes to the Mg(2+) binding site. The active-site Proton acceptor is S473.

Belongs to the IlvD/Edd family. In terms of assembly, homodimer. It depends on [2Fe-2S] cluster as a cofactor. Mg(2+) is required as a cofactor.

It carries out the reaction (2R)-2,3-dihydroxy-3-methylbutanoate = 3-methyl-2-oxobutanoate + H2O. The catalysed reaction is (2R,3R)-2,3-dihydroxy-3-methylpentanoate = (S)-3-methyl-2-oxopentanoate + H2O. Its pathway is amino-acid biosynthesis; L-isoleucine biosynthesis; L-isoleucine from 2-oxobutanoate: step 3/4. It functions in the pathway amino-acid biosynthesis; L-valine biosynthesis; L-valine from pyruvate: step 3/4. In terms of biological role, functions in the biosynthesis of branched-chain amino acids. Catalyzes the dehydration of (2R,3R)-2,3-dihydroxy-3-methylpentanoate (2,3-dihydroxy-3-methylvalerate) into 2-oxo-3-methylpentanoate (2-oxo-3-methylvalerate) and of (2R)-2,3-dihydroxy-3-methylbutanoate (2,3-dihydroxyisovalerate) into 2-oxo-3-methylbutanoate (2-oxoisovalerate), the penultimate precursor to L-isoleucine and L-valine, respectively. This Bacillus subtilis (strain 168) protein is Dihydroxy-acid dehydratase.